Here is a 593-residue protein sequence, read N- to C-terminus: Insulin-like growth factor 2 mRNA-binding protein 3-B (593 aa).

RRM domains follow at residues 2-75 and 81-156; these read NKLY…HSVP and RKLQ…YIPD. The segment at 159 to 208 is disordered; the sequence is ATPQSPSQQLQQPQQQHPQGRRGFGQRGPARQGSPGAAARPKPQSEVPLR. Positions 161–176 are enriched in low complexity; it reads PQSPSQQLQQPQQQHP. 2 KH domains span residues 204–269 and 285–352; these read EVPL…CKII and EIPL…EEEV. Residues 390–402 are compositionally biased toward low complexity; the sequence is SGMPPPSAGVSSP. Residues 390 to 412 are disordered; it reads SGMPPPSAGVSSPTTSASYPPFG. 2 consecutive KH domains span residues 417-482 and 499-565; these read SETV…QGRI and KLEA…QRKI. The interval 571–593 is disordered; the sequence is QVRRQQQQQQKTAQSGQPQPRRK.

This sequence belongs to the RRM IMP/VICKZ family. As to quaternary structure, homodimer and multimer. Associates with microtubules. Interaction with a translocation machinery protein TRAPA of the endoplasmic reticulum. Component of a mRNP complex, at least composed of DAZAP1, IGF2BP3, STAU and VgRBP60. The mRNP complex with DAZAP1, IGF2BP3, STAU and VgRBP60 is only found in the cytoplasm. Interacts with a hnRNP 1 related RNA transport protein VgRBP60 both in the nucleus (in an RNA-independent manner) and the cytoplasm (in an RNA-dependent manner). Found in a B3 activator complex. As to expression, expressed in oocytes, kidney and pancreas (at protein level). Expressed in oocytes, kidney and pancreas.

The protein resides in the nucleus. Its subcellular location is the cytoplasm. The protein localises to the endoplasmic reticulum. RNA-binding protein that acts as a regulator of mRNA transport and localization. Binds to the RNA sequence motif 5'-UUCAC-3'. Preferentially binds to N6-methyladenosine (m6A)-containing mRNAs and increases their stability. Mediates the specific association of Vg1 RNA to microtubules. May regulate mRNA translation. Binds specifically to the vegetal localization elements (VLE or VgLE) in the 3'-UTR of Vg1 and VegT mRNAs. Binds to the Vg1 and VegT mRNAs in both the nucleus and the cytoplasm. May regulate mRNA translation. Acts as a transcription regulator. Binds to the 5'-[TA]GGTTACT-3' motif within element 3 of the TFIIIA gene promoter. This Xenopus laevis (African clawed frog) protein is Insulin-like growth factor 2 mRNA-binding protein 3-B (igf2bp3-b).